Consider the following 414-residue polypeptide: Putative competence-damage inducible protein (414 aa).

The protein belongs to the CinA family.

In Clostridium novyi (strain NT), this protein is Putative competence-damage inducible protein.